We begin with the raw amino-acid sequence, 425 residues long: Adenosylhomocysteinase (425 aa).

Thr-60, Asp-132, and Glu-157 together coordinate substrate. Position 158–160 (158–160 (TTT)) interacts with NAD(+). Lys-187 and Asp-191 together coordinate substrate. NAD(+) contacts are provided by residues Asn-192, 221-226 (GYGWCG), Glu-244, Asn-279, 300-302 (SGH), and Asn-347.

This sequence belongs to the adenosylhomocysteinase family. The cofactor is NAD(+).

The protein resides in the cytoplasm. It catalyses the reaction S-adenosyl-L-homocysteine + H2O = L-homocysteine + adenosine. The protein operates within amino-acid biosynthesis; L-homocysteine biosynthesis; L-homocysteine from S-adenosyl-L-homocysteine: step 1/1. Functionally, may play a key role in the regulation of the intracellular concentration of adenosylhomocysteine. This Synechocystis sp. (strain ATCC 27184 / PCC 6803 / Kazusa) protein is Adenosylhomocysteinase.